Reading from the N-terminus, the 353-residue chain is Photosystem II protein D1 (353 aa).

An N-acetylthreonine modification is found at Thr2. Thr2 is modified (phosphothreonine). Transmembrane regions (helical) follow at residues 29-46 (YIGW…TATS), 118-133 (HFLL…EWEL), and 142-156 (WIAV…AAAA). Position 118 (His118) interacts with chlorophyll a. Tyr126 serves as a coordination point for pheophytin a. Asp170 and Glu189 together coordinate [CaMn4O5] cluster. The helical transmembrane segment at 197-218 (FHMLGVAGVFGGSLFSAMHGSL) threads the bilayer. His198 lines the chlorophyll a pocket. A quinone contacts are provided by residues His215 and 264–265 (SF). Fe cation is bound at residue His215. Residue His272 participates in Fe cation binding. Residues 274 to 288 (FLAAWPVVGIWFTAL) traverse the membrane as a helical segment. [CaMn4O5] cluster is bound by residues His332, Glu333, Asp342, and Ala344. Positions 345 to 353 (AVEAPSING) are excised as a propeptide.

This sequence belongs to the reaction center PufL/M/PsbA/D family. As to quaternary structure, PSII is composed of 1 copy each of membrane proteins PsbA, PsbB, PsbC, PsbD, PsbE, PsbF, PsbH, PsbI, PsbJ, PsbK, PsbL, PsbM, PsbT, PsbX, PsbY, PsbZ, Psb30/Ycf12, at least 3 peripheral proteins of the oxygen-evolving complex and a large number of cofactors. It forms dimeric complexes. Requires The D1/D2 heterodimer binds P680, chlorophylls that are the primary electron donor of PSII, and subsequent electron acceptors. It shares a non-heme iron and each subunit binds pheophytin, quinone, additional chlorophylls, carotenoids and lipids. D1 provides most of the ligands for the Mn4-Ca-O5 cluster of the oxygen-evolving complex (OEC). There is also a Cl(-1) ion associated with D1 and D2, which is required for oxygen evolution. The PSII complex binds additional chlorophylls, carotenoids and specific lipids. as cofactor. In terms of processing, tyr-161 forms a radical intermediate that is referred to as redox-active TyrZ, YZ or Y-Z. Post-translationally, C-terminally processed by CTPA; processing is essential to allow assembly of the oxygen-evolving complex and thus photosynthetic growth.

It localises to the plastid. Its subcellular location is the chloroplast thylakoid membrane. It carries out the reaction 2 a plastoquinone + 4 hnu + 2 H2O = 2 a plastoquinol + O2. Its function is as follows. Photosystem II (PSII) is a light-driven water:plastoquinone oxidoreductase that uses light energy to abstract electrons from H(2)O, generating O(2) and a proton gradient subsequently used for ATP formation. It consists of a core antenna complex that captures photons, and an electron transfer chain that converts photonic excitation into a charge separation. The D1/D2 (PsbA/PsbD) reaction center heterodimer binds P680, the primary electron donor of PSII as well as several subsequent electron acceptors. The polypeptide is Photosystem II protein D1 (Vitis vinifera (Grape)).